A 350-amino-acid chain; its full sequence is Eukaryotic translation initiation factor 3 subunit I (350 aa).

6 WD repeats span residues 8-49 (GHER…GTLE), 51-89 (HQGV…CVFT), 91-135 (ESPS…ESLT), 149-188 (QDGA…AVNS), 198-240 (EKNV…KVYK), and 296-335 (GHFG…FDFY).

It belongs to the eIF-3 subunit I family. In terms of assembly, component of the eukaryotic translation initiation factor 3 (eIF-3) complex.

The protein localises to the cytoplasm. In terms of biological role, component of the eukaryotic translation initiation factor 3 (eIF-3) complex, which is involved in protein synthesis of a specialized repertoire of mRNAs and, together with other initiation factors, stimulates binding of mRNA and methionyl-tRNAi to the 40S ribosome. The eIF-3 complex specifically targets and initiates translation of a subset of mRNAs involved in cell proliferation. The protein is Eukaryotic translation initiation factor 3 subunit I of Scheffersomyces stipitis (strain ATCC 58785 / CBS 6054 / NBRC 10063 / NRRL Y-11545) (Yeast).